We begin with the raw amino-acid sequence, 182 residues long: tRNA-splicing endonuclease (182 aa).

Active-site residues include tyrosine 119, histidine 127, and lysine 158.

It belongs to the tRNA-intron endonuclease family. Archaeal short subfamily. In terms of assembly, homotetramer; although the tetramer contains four active sites, only two participate in the cleavage. Therefore, it should be considered as a dimer of dimers.

The enzyme catalyses pretRNA = a 3'-half-tRNA molecule with a 5'-OH end + a 5'-half-tRNA molecule with a 2',3'-cyclic phosphate end + an intron with a 2',3'-cyclic phosphate and a 5'-hydroxyl terminus.. Its function is as follows. Endonuclease that removes tRNA introns. Cleaves pre-tRNA at the 5'- and 3'-splice sites to release the intron. The products are an intron and two tRNA half-molecules bearing 2',3' cyclic phosphate and 5'-OH termini. Recognizes a pseudosymmetric substrate in which 2 bulged loops of 3 bases are separated by a stem of 4 bp. The sequence is that of tRNA-splicing endonuclease from Saccharolobus islandicus (strain L.S.2.15 / Lassen #1) (Sulfolobus islandicus).